The chain runs to 185 residues: Ribosome-recycling factor (185 aa).

This sequence belongs to the RRF family.

The protein localises to the cytoplasm. In terms of biological role, responsible for the release of ribosomes from messenger RNA at the termination of protein biosynthesis. May increase the efficiency of translation by recycling ribosomes from one round of translation to another. This Haemophilus ducreyi (strain 35000HP / ATCC 700724) protein is Ribosome-recycling factor.